We begin with the raw amino-acid sequence, 191 residues long: Adenylate kinase (191 aa).

10 to 15 (AAGKGT) contributes to the ATP binding site. Positions 30-59 (STGDMLRAAIASGSELGQRVKGVLDRGELV) are NMP. AMP-binding positions include Thr-31, Arg-36, 57–59 (ELV), 85–88 (GFPR), and Gln-92. An LID region spans residues 126–136 (KRFEEQGRPDD). Arg-127 serves as a coordination point for ATP. The AMP site is built by Arg-133 and Arg-144. Residue Gly-172 coordinates ATP.

Belongs to the adenylate kinase family. Monomer.

The protein localises to the cytoplasm. The catalysed reaction is AMP + ATP = 2 ADP. It participates in purine metabolism; AMP biosynthesis via salvage pathway; AMP from ADP: step 1/1. In terms of biological role, catalyzes the reversible transfer of the terminal phosphate group between ATP and AMP. Plays an important role in cellular energy homeostasis and in adenine nucleotide metabolism. The chain is Adenylate kinase from Caulobacter vibrioides (strain ATCC 19089 / CIP 103742 / CB 15) (Caulobacter crescentus).